The chain runs to 433 residues: Homogentisate 1,2-dioxygenase (433 aa).

The active-site Proton acceptor is the H288. Fe cation is bound by residues H331 and E337. 2 residues coordinate homogentisate: Y346 and H367. H367 is a binding site for Fe cation.

It belongs to the homogentisate dioxygenase family. In terms of assembly, hexamer; dimer of trimers. Fe cation serves as cofactor.

The catalysed reaction is homogentisate + O2 = 4-maleylacetoacetate + H(+). It functions in the pathway amino-acid degradation; L-phenylalanine degradation; acetoacetate and fumarate from L-phenylalanine: step 4/6. Functionally, involved in the catabolism of homogentisate (2,5-dihydroxyphenylacetate or 2,5-OH-PhAc), a central intermediate in the degradation of phenylalanine and tyrosine. Catalyzes the oxidative ring cleavage of the aromatic ring of homogentisate to yield maleylacetoacetate. The polypeptide is Homogentisate 1,2-dioxygenase (Pseudomonas putida (strain ATCC 700007 / DSM 6899 / JCM 31910 / BCRC 17059 / LMG 24140 / F1)).